Here is an 860-residue protein sequence, read N- to C-terminus: Leucine--tRNA ligase (860 aa).

Positions 42 to 52 (PYPSGRLHMGH) match the 'HIGH' region motif. The short motif at 619-623 (KMSKS) is the 'KMSKS' region element. Lysine 622 serves as a coordination point for ATP.

This sequence belongs to the class-I aminoacyl-tRNA synthetase family.

Its subcellular location is the cytoplasm. It catalyses the reaction tRNA(Leu) + L-leucine + ATP = L-leucyl-tRNA(Leu) + AMP + diphosphate. The polypeptide is Leucine--tRNA ligase (Yersinia enterocolitica serotype O:8 / biotype 1B (strain NCTC 13174 / 8081)).